A 338-amino-acid polypeptide reads, in one-letter code: Eukaryotic translation initiation factor 3 subunit H (338 aa).

The MPN domain maps to 22–154; it reads VQCDGLAVMK…LKAYRLTPQA (133 aa).

This sequence belongs to the eIF-3 subunit H family. Component of the eukaryotic translation initiation factor 3 (eIF-3) complex. The eIF-3 complex interacts with pix. Interacts with mxt.

It is found in the cytoplasm. Functionally, component of the eukaryotic translation initiation factor 3 (eIF-3) complex, which is involved in protein synthesis of a specialized repertoire of mRNAs and, together with other initiation factors, stimulates binding of mRNA and methionyl-tRNAi to the 40S ribosome. The eIF-3 complex specifically targets and initiates translation of a subset of mRNAs involved in cell proliferation. The chain is Eukaryotic translation initiation factor 3 subunit H from Drosophila yakuba (Fruit fly).